We begin with the raw amino-acid sequence, 338 residues long: tRNA-specific 2-thiouridylase MnmA (338 aa).

Residues 6-13 and Met-32 each bind ATP; that span reads ALSGGVDS. Cys-92 (nucleophile) is an active-site residue. A disulfide bridge connects residues Cys-92 and Cys-186. ATP is bound at residue Gly-116. Residues 134–136 form an interaction with tRNA region; sequence KDQ. The active-site Cysteine persulfide intermediate is the Cys-186. The segment at 288–289 is interaction with tRNA; the sequence is RY.

The protein belongs to the MnmA/TRMU family.

Its subcellular location is the cytoplasm. It catalyses the reaction S-sulfanyl-L-cysteinyl-[protein] + uridine(34) in tRNA + AH2 + ATP = 2-thiouridine(34) in tRNA + L-cysteinyl-[protein] + A + AMP + diphosphate + H(+). Functionally, catalyzes the 2-thiolation of uridine at the wobble position (U34) of tRNA, leading to the formation of s(2)U34. The protein is tRNA-specific 2-thiouridylase MnmA of Campylobacter fetus subsp. fetus (strain 82-40).